Reading from the N-terminus, the 216-residue chain is uncharacterized protein (216 aa).

The HTH cro/C1-type domain maps to 8 to 63 (LKTLMTSVHINASELARRTGIAQPIIHRLSTGQNTNPKLATIKPIARYFMVNISQL). Positions 19-38 (ASELARRTGIAQPIIHRLST) form a DNA-binding region, H-T-H motif.

This is an uncharacterized protein from Coxiella burnetii (strain RSA 493 / Nine Mile phase I).